The primary structure comprises 70 residues: MKKGIHPKYEEITATCSCGNVMKIRSTVGHDLNLDVCGKCHPFFTGKQRDVATGGRVDRFNKRFSIPGSK.

4 residues coordinate Zn(2+): cysteine 16, cysteine 18, cysteine 37, and cysteine 40.

Belongs to the bacterial ribosomal protein bL31 family. Type A subfamily. As to quaternary structure, part of the 50S ribosomal subunit. Requires Zn(2+) as cofactor.

Its function is as follows. Binds the 23S rRNA. The chain is Large ribosomal subunit protein bL31 from Klebsiella pneumoniae (strain 342).